The primary structure comprises 208 residues: MIVIKDAHFLTSSSQLFQCPASLTSEMVILGRSNVGKSSFINTLLGKNLAKSSATPGKTRLANFFSTTWEDKENALTTTFNVIDLPGFGYAKVSKNLKKEWEGFLWELLSVRVSIKLFIHLVDARHLNLEIDKNAKENIQALLRPDQAYLSLFTKFDKLNKNEQHRLFLNAPKPFLINTTHFNALSSKYPTLEIVRQTLLKYLLTNPL.

One can recognise an EngB-type G domain in the interval 23 to 205; sequence LTSEMVILGR…RQTLLKYLLT (183 aa). GTP is bound by residues 31–38, 57–61, 84–87, 154–157, and 182–184; these read GRSNVGKS, GKTRL, DLPG, TKFD, and FNA. Residues Ser38 and Thr59 each contribute to the Mg(2+) site.

The protein belongs to the TRAFAC class TrmE-Era-EngA-EngB-Septin-like GTPase superfamily. EngB GTPase family. Mg(2+) is required as a cofactor.

Functionally, necessary for normal cell division and for the maintenance of normal septation. This is Probable GTP-binding protein EngB from Helicobacter pylori (strain HPAG1).